The primary structure comprises 73 residues: Conotoxin Cl9.2 (73 aa).

An N-terminal signal peptide occupies residues 1–18 (MSKLVILAVLVLLPLVTA). A propeptide spanning residues 19–41 (EHGRDEQAMQPEKKTMWTLWSLT) is cleaved from the precursor. 3 disulfides stabilise this stretch: Cys46–Cys61, Cys52–Cys63, and Cys58–Cys72.

As to expression, expressed by the venom duct.

The protein localises to the secreted. The chain is Conotoxin Cl9.2 from Californiconus californicus (California cone).